Here is a 283-residue protein sequence, read N- to C-terminus: Putative cuticle collagen 79 (283 aa).

Residues 59–283 (FKQQSSPPSP…ARSISKVAIQ (225 aa)) form a disordered region. Triple-helical region regions lie at residues 94-122 (GPPG…ENGG), 139-201 (GPRG…PGRK), and 204-269 (GEAG…DGAY). Over residues 137-146 (PPGPRGPPGP) the composition is skewed to pro residues. The span at 226–240 (TDGDDGVDGQPGDEG) shows a compositional bias: acidic residues. Low complexity predominate over residues 253 to 265 (PQGEQGTEGQPGT).

This sequence belongs to the cuticular collagen family. As to quaternary structure, collagen polypeptide chains are complexed within the cuticle by disulfide bonds and other types of covalent cross-links.

In terms of biological role, nematode cuticles are composed largely of collagen-like proteins. The cuticle functions both as an exoskeleton and as a barrier to protect the worm from its environment. This is Putative cuticle collagen 79 (col-79) from Caenorhabditis elegans.